Reading from the N-terminus, the 83-residue chain is MSSGGLLLLLGLLTLWEVLTPVSSTDRPDFCELPEDSGSCKGNFEAFYYNSDQHQCLEFIYGGCDGNANNFKTIEECKLTCAA.

The first 24 residues, 1–24, serve as a signal peptide directing secretion; that stretch reads MSSGGLLLLLGLLTLWEVLTPVSS. In terms of domain architecture, BPTI/Kunitz inhibitor spans 31-81; that stretch reads CELPEDSGSCKGNFEAFYYNSDQHQCLEFIYGGCDGNANNFKTIEECKLTC. 3 cysteine pairs are disulfide-bonded: Cys-31/Cys-81, Cys-40/Cys-64, and Cys-56/Cys-77.

The protein belongs to the venom Kunitz-type family. As to expression, expressed by the venom gland.

The protein localises to the secreted. In terms of biological role, serine protease inhibitor. The chain is Kunitz-type serine protease inhibitor nigrescinin-6 from Cryptophis nigrescens (Eastern small-eyed snake).